Here is a 96-residue protein sequence, read N- to C-terminus: Dynein light chain roadblock-type 2 (96 aa).

A2 bears the N-acetylalanine mark.

It belongs to the GAMAD family. Homodimer. The cytoplasmic dynein 1 complex consists of two catalytic heavy chains (HCs) and a number of non-catalytic subunits presented by intermediate chains (ICs), light intermediate chains (LICs) and light chains (LCs); the composition seems to vary in respect to the IC, LIC and LC composition. The heavy chain homodimer serves as a scaffold for the probable homodimeric assembly of the respective non-catalytic subunits. The ICs and LICs bind directly to the HC dimer and the LCs assemble on the IC dimer. Interacts with DYNC1I1 and DYNC1I2. Self-associates. Interacts with DYNLRB1.

The protein resides in the cytoplasm. It is found in the cytoskeleton. In terms of biological role, acts as one of several non-catalytic accessory components of the cytoplasmic dynein 1 complex that are thought to be involved in linking dynein to cargos and to adapter proteins that regulate dynein function. Cytoplasmic dynein 1 acts as a motor for the intracellular retrograde motility of vesicles and organelles along microtubules. The chain is Dynein light chain roadblock-type 2 (DYNLRB2) from Bos taurus (Bovine).